Consider the following 95-residue polypeptide: Aspartyl/glutamyl-tRNA(Asn/Gln) amidotransferase subunit C (95 aa).

Belongs to the GatC family. In terms of assembly, heterotrimer of A, B and C subunits.

The enzyme catalyses L-glutamyl-tRNA(Gln) + L-glutamine + ATP + H2O = L-glutaminyl-tRNA(Gln) + L-glutamate + ADP + phosphate + H(+). The catalysed reaction is L-aspartyl-tRNA(Asn) + L-glutamine + ATP + H2O = L-asparaginyl-tRNA(Asn) + L-glutamate + ADP + phosphate + 2 H(+). Functionally, allows the formation of correctly charged Asn-tRNA(Asn) or Gln-tRNA(Gln) through the transamidation of misacylated Asp-tRNA(Asn) or Glu-tRNA(Gln) in organisms which lack either or both of asparaginyl-tRNA or glutaminyl-tRNA synthetases. The reaction takes place in the presence of glutamine and ATP through an activated phospho-Asp-tRNA(Asn) or phospho-Glu-tRNA(Gln). This Azotobacter vinelandii (strain DJ / ATCC BAA-1303) protein is Aspartyl/glutamyl-tRNA(Asn/Gln) amidotransferase subunit C.